The sequence spans 256 residues: Imidazole glycerol phosphate synthase subunit HisF (256 aa).

Residues aspartate 13 and aspartate 132 contribute to the active site.

This sequence belongs to the HisA/HisF family. In terms of assembly, heterodimer of HisH and HisF.

It localises to the cytoplasm. It carries out the reaction 5-[(5-phospho-1-deoxy-D-ribulos-1-ylimino)methylamino]-1-(5-phospho-beta-D-ribosyl)imidazole-4-carboxamide + L-glutamine = D-erythro-1-(imidazol-4-yl)glycerol 3-phosphate + 5-amino-1-(5-phospho-beta-D-ribosyl)imidazole-4-carboxamide + L-glutamate + H(+). The protein operates within amino-acid biosynthesis; L-histidine biosynthesis; L-histidine from 5-phospho-alpha-D-ribose 1-diphosphate: step 5/9. Functionally, IGPS catalyzes the conversion of PRFAR and glutamine to IGP, AICAR and glutamate. The HisF subunit catalyzes the cyclization activity that produces IGP and AICAR from PRFAR using the ammonia provided by the HisH subunit. The chain is Imidazole glycerol phosphate synthase subunit HisF from Leptospira borgpetersenii serovar Hardjo-bovis (strain JB197).